Reading from the N-terminus, the 239-residue chain is Ribonuclease 3 (239 aa).

In terms of domain architecture, RNase III spans 12–137; that stretch reads REKVEAVIGY…LIAAIYLDAG (126 aa). Glu50 serves as a coordination point for Mg(2+). Asp54 is a catalytic residue. Residues Asp123 and Glu126 each contribute to the Mg(2+) site. Glu126 is a catalytic residue. The region spanning 162-231 is the DRBM domain; sequence DAKTELQEWA…ATRLLEREGV (70 aa).

The protein belongs to the ribonuclease III family. As to quaternary structure, homodimer. It depends on Mg(2+) as a cofactor.

The protein localises to the cytoplasm. It catalyses the reaction Endonucleolytic cleavage to 5'-phosphomonoester.. Digests double-stranded RNA. Involved in the processing of primary rRNA transcript to yield the immediate precursors to the large and small rRNAs (23S and 16S). Processes some mRNAs, and tRNAs when they are encoded in the rRNA operon. Processes pre-crRNA and tracrRNA of type II CRISPR loci if present in the organism. In Allorhizobium ampelinum (strain ATCC BAA-846 / DSM 112012 / S4) (Agrobacterium vitis (strain S4)), this protein is Ribonuclease 3.